A 229-amino-acid chain; its full sequence is 2-C-methyl-D-erythritol 4-phosphate cytidylyltransferase (229 aa).

It belongs to the IspD/TarI cytidylyltransferase family. IspD subfamily.

The catalysed reaction is 2-C-methyl-D-erythritol 4-phosphate + CTP + H(+) = 4-CDP-2-C-methyl-D-erythritol + diphosphate. The protein operates within isoprenoid biosynthesis; isopentenyl diphosphate biosynthesis via DXP pathway; isopentenyl diphosphate from 1-deoxy-D-xylulose 5-phosphate: step 2/6. Its function is as follows. Catalyzes the formation of 4-diphosphocytidyl-2-C-methyl-D-erythritol from CTP and 2-C-methyl-D-erythritol 4-phosphate (MEP). In Clostridium botulinum (strain 657 / Type Ba4), this protein is 2-C-methyl-D-erythritol 4-phosphate cytidylyltransferase.